Here is a 693-residue protein sequence, read N- to C-terminus: MFRVQRLRMFSTSRALYAGQNMTEKIVQRHAVGLPEGKTVVSGDYVSIKPAHCMSHDNSWPVALKFMGLGASTIKNPRQVVNTLDHDVQNKSEKNLTKYKNIENFAKKHGIDFYPAGRGIGHQIMIEEGYAFPLTMTVASDSHSNTYGGIGALGTPIVRTDAAAIWATGQTWWQIPPVAQVELKGELPAGISGKDIIVALCGVFNQDQVLNHAIEFTGDSLDKIPIDYRLTIANMTTEWGALSGLFPVDNVLLDFYRNRLTKVGNNHPRINEARINELQAKSDSLQADPDAKYAKKLIIDLSTLTHYVSGPNSVKISSTVDDLSKQDIKVNKAYLVSCTNSRLSDLESAANVVCPSGDINQVHKVAEGVEFYIAAASSEVEAEARATGAWQKLLNAGCLPLPAGCGPCIGLGTGLLEEGQVGISATNRNFKGRMGSKDALAYLASPSVVAASAILGKIGSPAEVLGTKDPNFTGVVATVEDAPATSADGKDVADESGASGSVEILEGFPSEISGELVLCDADNINTDGIYPGKYTYQDDVPKETMAKVCMENYDPDFQTKANPGDILISGFNFGTGSSREQAATAILAKGIKLVVSGSFGNIFFRNSINNALLTLEIPALINMLRDRYKDAPKELTRRTGWFLKWDVSQAKVYVTEGSVNGPIVLEQKVGELGKNLQEIIVKGGLESWVKSQL.

A mitochondrion-targeting transit peptide spans 1-17; the sequence is MFRVQRLRMFSTSRALY. Residues C338, C405, and C408 each contribute to the [4Fe-4S] cluster site.

Belongs to the aconitase/IPM isomerase family. It depends on [4Fe-4S] cluster as a cofactor.

The protein localises to the mitochondrion. It carries out the reaction (2R,3S)-homoisocitrate = cis-homoaconitate + H2O. Its pathway is amino-acid biosynthesis; L-lysine biosynthesis via AAA pathway; L-alpha-aminoadipate from 2-oxoglutarate: step 3/5. In terms of biological role, catalyzes the reversible hydration of cis-homoaconitate to (2R,3S)-homoisocitrate, a step in the alpha-aminoadipate pathway for lysine biosynthesis. This chain is Homoaconitase, mitochondrial (LYS4), found in Kluyveromyces lactis (strain ATCC 8585 / CBS 2359 / DSM 70799 / NBRC 1267 / NRRL Y-1140 / WM37) (Yeast).